A 205-amino-acid chain; its full sequence is Guanylate kinase (205 aa).

Positions 5-184 (GLLIVLSGPS…AVQKIKGIVE (180 aa)) constitute a Guanylate kinase-like domain. ATP is bound at residue 12–19 (GPSGVGKG).

It belongs to the guanylate kinase family.

The protein resides in the cytoplasm. The catalysed reaction is GMP + ATP = GDP + ADP. Essential for recycling GMP and indirectly, cGMP. The protein is Guanylate kinase of Listeria innocua serovar 6a (strain ATCC BAA-680 / CLIP 11262).